Reading from the N-terminus, the 126-residue chain is Fluoride-specific ion channel FluC (126 aa).

4 helical membrane passes run I5–G25, Y34–L54, V71–F91, and F100–Y120. Na(+) is bound by residues G76 and T79.

The protein belongs to the fluoride channel Fluc/FEX (TC 1.A.43) family.

The protein resides in the cell inner membrane. The catalysed reaction is fluoride(in) = fluoride(out). Its activity is regulated as follows. Na(+) is not transported, but it plays an essential structural role and its presence is essential for fluoride channel function. Functionally, fluoride-specific ion channel. Important for reducing fluoride concentration in the cell, thus reducing its toxicity. In Campylobacter hominis (strain ATCC BAA-381 / DSM 21671 / CCUG 45161 / LMG 19568 / NCTC 13146 / CH001A), this protein is Fluoride-specific ion channel FluC.